Here is a 544-residue protein sequence, read N- to C-terminus: Serine/threonine-protein kinase PAK 3 (544 aa).

The tract at residues 1 to 73 (MSDSLDNEEK…EKERPEISLP (73 aa)) is disordered. Residues Ser2 and Ser4 each carry the phosphoserine modification. The segment covering 18 to 32 (MNSNNRDSSALNHSS) has biased composition (polar residues). A Phosphoserine; by autocatalysis modification is found at Ser50. The span at 63–73 (KEKERPEISLP) shows a compositional bias: basic and acidic residues. The tract at residues 65–108 (KERPEISLPSDFEHTIHVGFDAVTGEFTGIPEQWARLLQTSNIT) is GTPase-binding. Residues 65-135 (KERPEISLPS…YDSKETVNNQ (71 aa)) form an autoregulatory region region. The 14-residue stretch at 70–83 (ISLPSDFEHTIHVG) folds into the CRIB domain. The interval 84-267 (FDAVTGEFTG…IVSVGDPKKK (184 aa)) is linker. The residue at position 139 (Ser139) is a Phosphoserine; by autocatalysis. Disordered regions lie at residues 156-197 (SNTK…RPEH) and 213-248 (PAAPNKEATPPSAENANSSTLYRNTDRQRKKSKMTD). At Ser171 the chain carries Phosphoserine. Residues 171–186 (SEEEDEEEEEEEDDNE) are compositionally biased toward acidic residues. The span at 224-235 (SAENANSSTLYR) shows a compositional bias: polar residues. Residues 268–519 (YTRFEKIGQG…AKELLQHPFL (252 aa)) enclose the Protein kinase domain. Residues 274–282 (IGQGASGTV) and Lys297 each bind ATP. Residue Asp387 is the Proton acceptor of the active site. Thr421 carries the phosphothreonine; by autocatalysis modification.

This sequence belongs to the protein kinase superfamily. STE Ser/Thr protein kinase family. STE20 subfamily. As to quaternary structure, interacts tightly with GTP-bound but not GDP-bound CDC42/p21 and RAC1. Shows highly specific binding to the SH3 domains of phospholipase C-gamma and of adapter protein NCK. Interacts with the C-terminal of APP. Interacts with ARHGEF6 and ARHGEF7. Interacts with GIT1 and GIT2. Mg(2+) serves as cofactor. In terms of processing, autophosphorylated when activated by CDC42/p21. Neddylated. Detected at high levels in the brain and at low levels in the testis.

Its subcellular location is the cytoplasm. The catalysed reaction is L-seryl-[protein] + ATP = O-phospho-L-seryl-[protein] + ADP + H(+). The enzyme catalyses L-threonyl-[protein] + ATP = O-phospho-L-threonyl-[protein] + ADP + H(+). Activated by binding small G proteins. Binding of GTP-bound CDC42 or RAC1 to the autoregulatory region releases monomers from the autoinhibited dimer, enables phosphorylation of Thr-421 and allows the kinase domain to adopt an active structure. In terms of biological role, serine/threonine protein kinase that plays a role in a variety of different signaling pathways including cytoskeleton regulation, cell migration, or cell cycle regulation. Plays a role in dendrite spine morphogenesis as well as synapse formation and plasticity. Acts as a downstream effector of the small GTPases CDC42 and RAC1. Activation by the binding of active CDC42 and RAC1 results in a conformational change and a subsequent autophosphorylation on several serine and/or threonine residues. Phosphorylates MAPK4 and MAPK6 and activates the downstream target MAPKAPK5, a regulator of F-actin polymerization and cell migration. Additionally, phosphorylates TNNI3/troponin I to modulate calcium sensitivity and relaxation kinetics of thin myofilaments. May also be involved in early neuronal development. In hippocampal neurons, necessary for the formation of dendritic spines and excitatory synapses; this function is dependent on kinase activity and may be exerted by the regulation of actomyosin contractility through the phosphorylation of myosin II regulatory light chain (MLC). In Rattus norvegicus (Rat), this protein is Serine/threonine-protein kinase PAK 3 (Pak3).